Reading from the N-terminus, the 388-residue chain is Dual-specificity RNA methyltransferase RlmN (388 aa).

The active-site Proton acceptor is the glutamate 109. The 240-residue stretch at 115–354 (EEDRATLCVS…TIVRKTRGDD (240 aa)) folds into the Radical SAM core domain. Cysteines 122 and 359 form a disulfide. Residues cysteine 129, cysteine 133, and cysteine 136 each coordinate [4Fe-4S] cluster. S-adenosyl-L-methionine-binding positions include 183–184 (GE), serine 215, 237–239 (SLH), and asparagine 316. Cysteine 359 serves as the catalytic S-methylcysteine intermediate.

It belongs to the radical SAM superfamily. RlmN family. [4Fe-4S] cluster serves as cofactor.

The protein localises to the cytoplasm. It carries out the reaction adenosine(2503) in 23S rRNA + 2 reduced [2Fe-2S]-[ferredoxin] + 2 S-adenosyl-L-methionine = 2-methyladenosine(2503) in 23S rRNA + 5'-deoxyadenosine + L-methionine + 2 oxidized [2Fe-2S]-[ferredoxin] + S-adenosyl-L-homocysteine. It catalyses the reaction adenosine(37) in tRNA + 2 reduced [2Fe-2S]-[ferredoxin] + 2 S-adenosyl-L-methionine = 2-methyladenosine(37) in tRNA + 5'-deoxyadenosine + L-methionine + 2 oxidized [2Fe-2S]-[ferredoxin] + S-adenosyl-L-homocysteine. In terms of biological role, specifically methylates position 2 of adenine 2503 in 23S rRNA and position 2 of adenine 37 in tRNAs. m2A2503 modification seems to play a crucial role in the proofreading step occurring at the peptidyl transferase center and thus would serve to optimize ribosomal fidelity. This is Dual-specificity RNA methyltransferase RlmN from Enterobacter sp. (strain 638).